We begin with the raw amino-acid sequence, 281 residues long: Ribosomal RNA small subunit methyltransferase A (281 aa).

The S-adenosyl-L-methionine site is built by asparagine 25, leucine 27, glycine 52, glutamate 73, aspartate 99, and asparagine 118.

This sequence belongs to the class I-like SAM-binding methyltransferase superfamily. rRNA adenine N(6)-methyltransferase family. RsmA subfamily.

It localises to the cytoplasm. It catalyses the reaction adenosine(1518)/adenosine(1519) in 16S rRNA + 4 S-adenosyl-L-methionine = N(6)-dimethyladenosine(1518)/N(6)-dimethyladenosine(1519) in 16S rRNA + 4 S-adenosyl-L-homocysteine + 4 H(+). In terms of biological role, specifically dimethylates two adjacent adenosines (A1518 and A1519) in the loop of a conserved hairpin near the 3'-end of 16S rRNA in the 30S particle. May play a critical role in biogenesis of 30S subunits. The protein is Ribosomal RNA small subunit methyltransferase A of Erythrobacter litoralis (strain HTCC2594).